We begin with the raw amino-acid sequence, 344 residues long: Succinylglutamate desuccinylase (344 aa).

3 residues coordinate Zn(2+): histidine 63, glutamate 66, and histidine 160. Residue glutamate 224 is part of the active site.

Belongs to the AspA/AstE family. Succinylglutamate desuccinylase subfamily. The cofactor is Zn(2+).

It catalyses the reaction N-succinyl-L-glutamate + H2O = L-glutamate + succinate. It functions in the pathway amino-acid degradation; L-arginine degradation via AST pathway; L-glutamate and succinate from L-arginine: step 5/5. Its function is as follows. Transforms N(2)-succinylglutamate into succinate and glutamate. This is Succinylglutamate desuccinylase from Shewanella sp. (strain MR-4).